A 153-amino-acid chain; its full sequence is NAD(P)H-quinone oxidoreductase subunit N (153 aa).

It belongs to the complex I NdhN subunit family. In terms of assembly, NDH-1 can be composed of about 15 different subunits; different subcomplexes with different compositions have been identified which probably have different functions.

The protein localises to the cellular thylakoid membrane. The catalysed reaction is a plastoquinone + NADH + (n+1) H(+)(in) = a plastoquinol + NAD(+) + n H(+)(out). It carries out the reaction a plastoquinone + NADPH + (n+1) H(+)(in) = a plastoquinol + NADP(+) + n H(+)(out). Its function is as follows. NDH-1 shuttles electrons from an unknown electron donor, via FMN and iron-sulfur (Fe-S) centers, to quinones in the respiratory and/or the photosynthetic chain. The immediate electron acceptor for the enzyme in this species is believed to be plastoquinone. Couples the redox reaction to proton translocation, and thus conserves the redox energy in a proton gradient. Cyanobacterial NDH-1 also plays a role in inorganic carbon-concentration. This is NAD(P)H-quinone oxidoreductase subunit N from Synechococcus sp. (strain WH7803).